The primary structure comprises 484 residues: UDP-glucose:undecaprenyl-phosphate glucose-1-phosphate transferase (484 aa).

Transmembrane regions (helical) follow at residues 37-57 (MVVASGLIAYRIVFGTWVPAA), 59-79 (YRVAIATTLLYSVICFALFPL), 93-113 (VVLGGAFGGVFALFAVHALIV), 122-142 (GWVGLWFVGGLVSLVAARTLL), and 299-319 (ILAVIALMGLWPLMLAIAVGV).

This sequence belongs to the bacterial sugar transferase family.

The protein localises to the cell inner membrane. It carries out the reaction di-trans,octa-cis-undecaprenyl phosphate + UDP-alpha-D-glucose = alpha-D-glucosyl di-trans,octa-cis-undecaprenyl diphosphate + UMP. It participates in glycan biosynthesis; xanthan biosynthesis. Its function is as follows. Is the initiating enzyme for the synthesis of the exopolysaccharide xanthan. Catalyzes the transfer of the glucose-1-phosphate moiety from UDP-Glc onto the carrier lipid undecaprenyl phosphate (C55-P), forming a phosphoanhydride bond yielding to glucosyl-pyrophosphoryl-undecaprenol (Glc-PP-C55). In Xanthomonas campestris pv. campestris, this protein is UDP-glucose:undecaprenyl-phosphate glucose-1-phosphate transferase (gumD).